The primary structure comprises 111 residues: Universal stress protein B (111 aa).

The next 2 membrane-spanning stretches (helical) occupy residues 1–21 and 90–110; these read MISTIALFWALCVVCVVNMAR and FILTSALCGLVVVSLIALMIW.

This sequence belongs to the universal stress protein B family.

It is found in the cell inner membrane. This chain is Universal stress protein B, found in Klebsiella pneumoniae (strain 342).